The primary structure comprises 127 residues: Large ribosomal subunit protein bL20c (127 aa).

Belongs to the bacterial ribosomal protein bL20 family.

The protein localises to the plastid. It is found in the chloroplast. Binds directly to 23S ribosomal RNA and is necessary for the in vitro assembly process of the 50S ribosomal subunit. It is not involved in the protein synthesizing functions of that subunit. The sequence is that of Large ribosomal subunit protein bL20c from Jasminum nudiflorum (Winter jasmine).